The chain runs to 206 residues: Peptidyl-tRNA hydrolase (206 aa).

TRNA is bound at residue Tyr19. The Proton acceptor role is filled by His24. 3 residues coordinate tRNA: Phe70, Asn72, and Asn118.

The protein belongs to the PTH family. Monomer.

Its subcellular location is the cytoplasm. It carries out the reaction an N-acyl-L-alpha-aminoacyl-tRNA + H2O = an N-acyl-L-amino acid + a tRNA + H(+). Hydrolyzes ribosome-free peptidyl-tRNAs (with 1 or more amino acids incorporated), which drop off the ribosome during protein synthesis, or as a result of ribosome stalling. In terms of biological role, catalyzes the release of premature peptidyl moieties from peptidyl-tRNA molecules trapped in stalled 50S ribosomal subunits, and thus maintains levels of free tRNAs and 50S ribosomes. The sequence is that of Peptidyl-tRNA hydrolase from Synechococcus sp. (strain CC9902).